The chain runs to 437 residues: Endoplasmic reticulum protein SC65 (437 aa).

Positions 1 to 18 are cleaved as a signal peptide; the sequence is MARVAWGLLWLLLGSAGA. An N-linked (GlcNAc...) asparagine glycan is attached at Asn-361. Acidic residues-rich tracts occupy residues 381–413 and 428–437; these read DEMELEETEPPLEPEDALSDAEFEGEGDYEEGM and AEAEPEPELA. A disordered region spans residues 381–437; sequence DEMELEETEPPLEPEDALSDAEFEGEGDYEEGMYADWWQEPDAKGDEAEAEPEPELA.

It belongs to the leprecan family. As to quaternary structure, interacts with PLOD1, P3H3 and PPIB. Identified in a complex with PLOD1 and P3H3. Detected in fibroblasts (at protein level). Detected in spleen, prostate, testis, ovary, colon, pancreas, kidney, placenta and heart.

Its subcellular location is the endoplasmic reticulum. In terms of biological role, part of a complex composed of PLOD1, P3H3 and P3H4 that catalyzes hydroxylation of lysine residues in collagen alpha chains and is required for normal assembly and cross-linking of collagen fibrils. Required for normal bone density and normal skin stability via its role in hydroxylation of lysine residues in collagen alpha chains and in collagen fibril assembly. The polypeptide is Endoplasmic reticulum protein SC65 (Homo sapiens (Human)).